Here is a 102-residue protein sequence, read N- to C-terminus: Putative protein p21 (102 aa).

Positions 73-102 (SHQDRTKQSGRGRILARGKYVVSHPSDQAH) are disordered.

This Escherichia coli (Bacteriophage APSE-1) protein is Putative protein p21 (21).